The sequence spans 204 residues: Holliday junction branch migration complex subunit RuvA (204 aa).

Positions 1–64 (MIGRLQGILL…EDAHLLFGFA (64 aa)) are domain I. Residues 65–143 (QKTDRTLFRE…GIKQSDFFVE (79 aa)) form a domain II region. Positions 144–155 (STHIPLSPSIES) are flexible linker. The tract at residues 156–204 (HSESSSDEAISALIALGYKPAEAEKMVKRVAKPELTSEQVIREALKAAL) is domain III.

It belongs to the RuvA family. Homotetramer. Forms an RuvA(8)-RuvB(12)-Holliday junction (HJ) complex. HJ DNA is sandwiched between 2 RuvA tetramers; dsDNA enters through RuvA and exits via RuvB. An RuvB hexamer assembles on each DNA strand where it exits the tetramer. Each RuvB hexamer is contacted by two RuvA subunits (via domain III) on 2 adjacent RuvB subunits; this complex drives branch migration. In the full resolvosome a probable DNA-RuvA(4)-RuvB(12)-RuvC(2) complex forms which resolves the HJ.

The protein localises to the cytoplasm. Functionally, the RuvA-RuvB-RuvC complex processes Holliday junction (HJ) DNA during genetic recombination and DNA repair, while the RuvA-RuvB complex plays an important role in the rescue of blocked DNA replication forks via replication fork reversal (RFR). RuvA specifically binds to HJ cruciform DNA, conferring on it an open structure. The RuvB hexamer acts as an ATP-dependent pump, pulling dsDNA into and through the RuvAB complex. HJ branch migration allows RuvC to scan DNA until it finds its consensus sequence, where it cleaves and resolves the cruciform DNA. This is Holliday junction branch migration complex subunit RuvA from Haemophilus influenzae (strain 86-028NP).